A 327-amino-acid chain; its full sequence is Ribosomal RNA small subunit methyltransferase H (327 aa).

S-adenosyl-L-methionine-binding positions include 42 to 44, Asp61, Leu95, Asp109, and Gln116; that span reads GGH.

Belongs to the methyltransferase superfamily. RsmH family.

It is found in the cytoplasm. It catalyses the reaction cytidine(1402) in 16S rRNA + S-adenosyl-L-methionine = N(4)-methylcytidine(1402) in 16S rRNA + S-adenosyl-L-homocysteine + H(+). Functionally, specifically methylates the N4 position of cytidine in position 1402 (C1402) of 16S rRNA. This is Ribosomal RNA small subunit methyltransferase H from Desulfovibrio desulfuricans (strain ATCC 27774 / DSM 6949 / MB).